The primary structure comprises 299 residues: Ethylmalonyl-CoA decarboxylase (299 aa).

Belongs to the enoyl-CoA hydratase/isomerase family.

It localises to the cytoplasm. Its subcellular location is the cytosol. The enzyme catalyses (2S)-ethylmalonyl-CoA + H(+) = butanoyl-CoA + CO2. It catalyses the reaction (S)-methylmalonyl-CoA + H(+) = propanoyl-CoA + CO2. The catalysed reaction is (2R)-ethylmalonyl-CoA + H(+) = butanoyl-CoA + CO2. Decarboxylates ethylmalonyl-CoA, a potentially toxic metabolite, to form butyryl-CoA, suggesting it might be involved in metabolite proofreading. Acts preferentially on (S)-ethylmalonyl-CoA but also has some activity on the (R)-isomer. Also has methylmalonyl-CoA decarboxylase activity at lower level. The chain is Ethylmalonyl-CoA decarboxylase (echdc1) from Xenopus tropicalis (Western clawed frog).